We begin with the raw amino-acid sequence, 194 residues long: Probable proteasome subunit beta type-4 (194 aa).

This sequence belongs to the peptidase T1B family. As to quaternary structure, the 26S proteasome consists of a 20S proteasome core and two 19S regulatory subunits. The 20S proteasome core is composed of 28 subunits that are arranged in four stacked rings, resulting in a barrel-shaped structure. The two end rings are each formed by seven alpha subunits, and the two central rings are each formed by seven beta subunits. The catalytic chamber with the active sites is on the inside of the barrel.

Its subcellular location is the cytoplasm. The protein localises to the nucleus. Its function is as follows. Non-catalytic component of the proteasome, a multicatalytic proteinase complex which is characterized by its ability to cleave peptides with Arg, Phe, Tyr, Leu, and Glu adjacent to the leaving group at neutral or slightly basic pH. The proteasome has an ATP-dependent proteolytic activity. The protein is Probable proteasome subunit beta type-4 (PRO2) of Meyerozyma guilliermondii (strain ATCC 6260 / CBS 566 / DSM 6381 / JCM 1539 / NBRC 10279 / NRRL Y-324) (Yeast).